Consider the following 170-residue polypeptide: Adenine phosphoribosyltransferase (170 aa).

Belongs to the purine/pyrimidine phosphoribosyltransferase family. As to quaternary structure, homodimer.

It localises to the cytoplasm. The catalysed reaction is AMP + diphosphate = 5-phospho-alpha-D-ribose 1-diphosphate + adenine. It functions in the pathway purine metabolism; AMP biosynthesis via salvage pathway; AMP from adenine: step 1/1. Functionally, catalyzes a salvage reaction resulting in the formation of AMP, that is energically less costly than de novo synthesis. The protein is Adenine phosphoribosyltransferase of Bacillus velezensis (strain DSM 23117 / BGSC 10A6 / LMG 26770 / FZB42) (Bacillus amyloliquefaciens subsp. plantarum).